The sequence spans 614 residues: Zinc finger protein ztf-7 (614 aa).

Over residues 1–10 the composition is skewed to gly residues; that stretch reads MSTSGSGGGN. Positions 1–160 are disordered; sequence MSTSGSGGGN…SRPKKPEKMS (160 aa). The segment covering 18 to 41 has biased composition (polar residues); it reads NVASSPNANPKKNADTESSGGSKN. Positions 54 to 69 are enriched in low complexity; the sequence is GSNSRNGSRTNSVSNS. The segment covering 74-83 has biased composition (basic and acidic residues); that stretch reads NRKDWTDRKS. A compositionally biased stretch (acidic residues) spans 132 to 150; that stretch reads DYSDEYELDEPFSDSDDED. 2 consecutive C2H2-type zinc fingers follow at residues 356–380 and 447–470; these read NECI…KRNH and VVCL…KTTH.

This sequence belongs to the ZNF277 family. Interacts with rps-2.

It is found in the cytoplasm. Its function is as follows. Probable transcription factor. Limits the ability to tolerate cold environment or cold-warm stress. In complex with rps-2, mediates the cold-warm shock response by promoting translocation of components of the RNA exosome from the nucleolus to nucleoplasm. This Caenorhabditis elegans protein is Zinc finger protein ztf-7.